A 1196-amino-acid chain; its full sequence is Major DNA-binding protein (1196 aa).

A zinc finger spans residues 499 to 512; the sequence is CNLCTFETRHACAH. 2 consecutive short sequence motifs (required for filament formation) follow at residues 843–844 and 1142–1144; these read FW and FNF. Positions 1171–1196 are required for nuclear localization; it reads RKRAFHGDDPFGEGPPEKKDLTLDML. The segment at 1176 to 1196 is disordered; it reads HGDDPFGEGPPEKKDLTLDML.

The protein belongs to the herpesviridae major DNA-binding protein family. In terms of assembly, homooligomers. Forms double-helical filaments necessary for the formation of replication compartments within the host nucleus. Interacts with the origin-binding protein. Interacts with the helicase primase complex; this interaction stimulates primer synthesis activity of the helicase-primase complex. Interacts with the DNA polymerase. Interacts with the alkaline exonuclease; this interaction increases its nuclease processivity.

The protein resides in the host nucleus. Its function is as follows. Plays several crucial roles in viral infection. Participates in the opening of the viral DNA origin to initiate replication by interacting with the origin-binding protein. May disrupt loops, hairpins and other secondary structures present on ssDNA to reduce and eliminate pausing of viral DNA polymerase at specific sites during elongation. Promotes viral DNA recombination by performing strand-transfer, characterized by the ability to transfer a DNA strand from a linear duplex to a complementary single-stranded DNA circle. Can also catalyze the renaturation of complementary single strands. Additionally, reorganizes the host cell nucleus, leading to the formation of prereplicative sites and replication compartments. This process is driven by the protein which can form double-helical filaments in the absence of DNA. This is Major DNA-binding protein from Human herpesvirus 2 (strain HG52) (HHV-2).